A 462-amino-acid chain; its full sequence is Alanine racemase (462 aa).

Lys34 serves as the catalytic Proton acceptor; specific for D-alanine. Lys34 carries the post-translational modification N6-(pyridoxal phosphate)lysine. The unknown insert stretch occupies residues Ala73–Leu132. Arg193 contacts substrate. The region spanning Asp286 to Gly332 is the RPE1 insert domain. The active-site Proton acceptor; specific for L-alanine is Tyr357. Met405 provides a ligand contact to substrate.

The protein belongs to the alanine racemase family. Pyridoxal 5'-phosphate is required as a cofactor.

It carries out the reaction L-alanine = D-alanine. Its pathway is amino-acid biosynthesis; D-alanine biosynthesis; D-alanine from L-alanine: step 1/1. Functionally, catalyzes the interconversion of L-alanine and D-alanine. May also act on other amino acids. The sequence is that of Alanine racemase (alr) from Rickettsia felis (strain ATCC VR-1525 / URRWXCal2) (Rickettsia azadi).